Reading from the N-terminus, the 439-residue chain is Putative FBD-associated F-box protein At1g05080 (439 aa).

The F-box domain maps to 12 to 58; sequence EDRISVLPEDLLVVILDLLPTKDVVATMILSKRWLSIWTMVRTLEYT. Residues 360–410 enclose the FBD domain; it reads SWKQPSHVPECLSSQLEIFEWRDYGDRIIEEEFLTYVLANSKRLKTATISL.

This is Putative FBD-associated F-box protein At1g05080 from Arabidopsis thaliana (Mouse-ear cress).